The chain runs to 296 residues: Formamidopyrimidine-DNA glycosylase (296 aa).

Pro2 functions as the Schiff-base intermediate with DNA in the catalytic mechanism. Residue Glu3 is the Proton donor of the active site. The Proton donor; for beta-elimination activity role is filled by Lys58. DNA is bound by residues His104, Arg126, and Lys169. Residues 260–296 (SVYDRESQACRTPGCGGTVARIVQAGRSTFYCATCQK) form an FPG-type zinc finger. Arg286 serves as the catalytic Proton donor; for delta-elimination activity.

It belongs to the FPG family. In terms of assembly, monomer. Zn(2+) is required as a cofactor.

It catalyses the reaction Hydrolysis of DNA containing ring-opened 7-methylguanine residues, releasing 2,6-diamino-4-hydroxy-5-(N-methyl)formamidopyrimidine.. The catalysed reaction is 2'-deoxyribonucleotide-(2'-deoxyribose 5'-phosphate)-2'-deoxyribonucleotide-DNA = a 3'-end 2'-deoxyribonucleotide-(2,3-dehydro-2,3-deoxyribose 5'-phosphate)-DNA + a 5'-end 5'-phospho-2'-deoxyribonucleoside-DNA + H(+). Its function is as follows. Involved in base excision repair of DNA damaged by oxidation or by mutagenic agents. Acts as a DNA glycosylase that recognizes and removes damaged bases. Has a preference for oxidized purines, such as 7,8-dihydro-8-oxoguanine (8-oxoG). Has AP (apurinic/apyrimidinic) lyase activity and introduces nicks in the DNA strand. Cleaves the DNA backbone by beta-delta elimination to generate a single-strand break at the site of the removed base with both 3'- and 5'-phosphates. In Rhizobium johnstonii (strain DSM 114642 / LMG 32736 / 3841) (Rhizobium leguminosarum bv. viciae), this protein is Formamidopyrimidine-DNA glycosylase.